We begin with the raw amino-acid sequence, 856 residues long: Beta-galactosidase 3 (856 aa).

A signal peptide spans 1–31 (MREMGTGDSASRLILWFCLGFLILGVGFVQC). The Proton donor role is filled by Glu189. The active-site Nucleophile is Glu258. N-linked (GlcNAc...) asparagine glycosylation is present at Asn468. The SUEL-type lectin domain maps to 760–846 (TFHRPKVHLK…KRLTVEAVCA (87 aa)).

It belongs to the glycosyl hydrolase 35 family. As to expression, ubiquitous.

Its subcellular location is the secreted. The protein localises to the extracellular space. It is found in the apoplast. It catalyses the reaction Hydrolysis of terminal non-reducing beta-D-galactose residues in beta-D-galactosides.. The chain is Beta-galactosidase 3 (BGAL3) from Arabidopsis thaliana (Mouse-ear cress).